A 1857-amino-acid chain; its full sequence is Fatty acid synthase subunit alpha (1857 aa).

A disordered region spans residues E96–A132. Positions T102–A119 are enriched in low complexity. Positions V139 to Q214 constitute a Carrier domain. The residue at position 174 (S174) is an O-(pantetheine 4'-phosphoryl)serine. The segment at Q577–K604 is disordered. Positions K648 to T845 are beta-ketoacyl reductase. Positions L1092–H1633 constitute a Ketosynthase family 3 (KS3) domain. Residues C1275, H1518, and H1559 each act as for beta-ketoacyl synthase activity in the active site. Residues D1743, V1744, and E1745 each contribute to the Mg(2+) site. Acetyl-CoA is bound by residues D1743 to E1745, Y1769, S1779, E1788 to S1798, V1812 to N1815, and I1842 to H1844. Mg(2+) contacts are provided by S1843 and H1844.

The protein belongs to the thiolase-like superfamily. Fungal fatty acid synthetase subunit alpha family. [Alpha(6)beta(6)] hexamers of two multifunctional subunits (alpha and beta).

It carries out the reaction acetyl-CoA + n malonyl-CoA + 2n NADPH + 4n H(+) = a long-chain-acyl-CoA + n CoA + n CO2 + 2n NADP(+).. It catalyses the reaction a fatty acyl-[ACP] + malonyl-[ACP] + H(+) = a 3-oxoacyl-[ACP] + holo-[ACP] + CO2. The catalysed reaction is a (3R)-hydroxyacyl-[ACP] + NADP(+) = a 3-oxoacyl-[ACP] + NADPH + H(+). Its function is as follows. Fatty acid synthetase catalyzes the formation of long-chain fatty acids from acetyl-CoA, malonyl-CoA and NADPH. The alpha subunit contains domains for: acyl carrier protein, 3-oxoacyl-[acyl-carrier-protein] reductase, and 3-oxoacyl-[acyl-carrier-protein] synthase. In Penicillium patulum (Penicillium griseofulvum), this protein is Fatty acid synthase subunit alpha (FAS2).